The following is a 122-amino-acid chain: Large ribosomal subunit protein uL14 (122 aa).

This sequence belongs to the universal ribosomal protein uL14 family. In terms of assembly, part of the 50S ribosomal subunit. Forms a cluster with proteins L3 and L19. In the 70S ribosome, L14 and L19 interact and together make contacts with the 16S rRNA in bridges B5 and B8. Interacts with ribosomal silencing factor RsfS, which may inhibit ribosomal subunit association.

Its function is as follows. Binds to 23S rRNA. Forms part of two intersubunit bridges in the 70S ribosome. The polypeptide is Large ribosomal subunit protein uL14 (Treponema pallidum (strain Nichols)).